Consider the following 397-residue polypeptide: Acetate kinase (397 aa).

Residue asparagine 9 coordinates Mg(2+). Lysine 16 contributes to the ATP binding site. Arginine 87 provides a ligand contact to substrate. Aspartate 144 serves as the catalytic Proton donor/acceptor. Residues 204–208, 279–281, and 327–331 each bind ATP; these read HLGNG, DCR, and GIGEN. A Mg(2+)-binding site is contributed by glutamate 381.

This sequence belongs to the acetokinase family. In terms of assembly, homodimer. The cofactor is Mg(2+). Requires Mn(2+) as cofactor.

It localises to the cytoplasm. It carries out the reaction acetate + ATP = acetyl phosphate + ADP. It functions in the pathway metabolic intermediate biosynthesis; acetyl-CoA biosynthesis; acetyl-CoA from acetate: step 1/2. In terms of biological role, catalyzes the formation of acetyl phosphate from acetate and ATP. Can also catalyze the reverse reaction. The sequence is that of Acetate kinase from Chromobacterium violaceum (strain ATCC 12472 / DSM 30191 / JCM 1249 / CCUG 213 / NBRC 12614 / NCIMB 9131 / NCTC 9757 / MK).